Reading from the N-terminus, the 398-residue chain is Carbamoyl phosphate synthase small chain (398 aa).

Positions 1–207 (MIQTISSSRP…KGYGTNNVHN (207 aa)) are CPSase. L-glutamine-binding residues include Ser-60, Gly-257, and Gly-259. In terms of domain architecture, Glutamine amidotransferase type-1 spans 209–397 (HIVAIDYGIK…CDLIMNHKKI (189 aa)). Cys-286 acts as the Nucleophile in catalysis. L-glutamine is bound by residues Leu-287, Gln-290, Asn-328, Gly-330, and Phe-331. Catalysis depends on residues His-370 and Glu-372.

The protein belongs to the CarA family. In terms of assembly, composed of two chains; the small (or glutamine) chain promotes the hydrolysis of glutamine to ammonia, which is used by the large (or ammonia) chain to synthesize carbamoyl phosphate. Tetramer of heterodimers (alpha,beta)4.

It catalyses the reaction hydrogencarbonate + L-glutamine + 2 ATP + H2O = carbamoyl phosphate + L-glutamate + 2 ADP + phosphate + 2 H(+). It carries out the reaction L-glutamine + H2O = L-glutamate + NH4(+). It functions in the pathway amino-acid biosynthesis; L-arginine biosynthesis; carbamoyl phosphate from bicarbonate: step 1/1. The protein operates within pyrimidine metabolism; UMP biosynthesis via de novo pathway; (S)-dihydroorotate from bicarbonate: step 1/3. Functionally, small subunit of the glutamine-dependent carbamoyl phosphate synthetase (CPSase). CPSase catalyzes the formation of carbamoyl phosphate from the ammonia moiety of glutamine, carbonate, and phosphate donated by ATP, constituting the first step of 2 biosynthetic pathways, one leading to arginine and/or urea and the other to pyrimidine nucleotides. The small subunit (glutamine amidotransferase) binds and cleaves glutamine to supply the large subunit with the substrate ammonia. This Bartonella tribocorum (strain CIP 105476 / IBS 506) protein is Carbamoyl phosphate synthase small chain.